We begin with the raw amino-acid sequence, 140 residues long: ATP synthase epsilon chain (140 aa).

This sequence belongs to the ATPase epsilon chain family. In terms of assembly, F-type ATPases have 2 components, CF(1) - the catalytic core - and CF(0) - the membrane proton channel. CF(1) has five subunits: alpha(3), beta(3), gamma(1), delta(1), epsilon(1). CF(0) has three main subunits: a, b and c.

It localises to the cell inner membrane. In terms of biological role, produces ATP from ADP in the presence of a proton gradient across the membrane. The polypeptide is ATP synthase epsilon chain (Sodalis glossinidius (strain morsitans)).